The primary structure comprises 130 residues: Small ribosomal subunit protein uS11 (130 aa).

Belongs to the universal ribosomal protein uS11 family. In terms of assembly, part of the 30S ribosomal subunit. Interacts with proteins S7 and S18. Binds to IF-3.

Located on the platform of the 30S subunit, it bridges several disparate RNA helices of the 16S rRNA. Forms part of the Shine-Dalgarno cleft in the 70S ribosome. In Gluconacetobacter diazotrophicus (strain ATCC 49037 / DSM 5601 / CCUG 37298 / CIP 103539 / LMG 7603 / PAl5), this protein is Small ribosomal subunit protein uS11.